The following is a 2958-amino-acid chain: Protein CSF1 (2958 aa).

The Cytoplasmic segment spans residues methionine 1 to aspartate 17. The chain crosses the membrane as a helical; Signal-anchor for type II membrane protein span at residues phenylalanine 18–phenylalanine 38. At tyrosine 39–histidine 2958 the chain is on the extracellular side. N-linked (GlcNAc...) asparagine glycosylation is found at asparagine 82, asparagine 117, asparagine 144, asparagine 271, asparagine 478, asparagine 530, asparagine 816, asparagine 821, asparagine 839, and asparagine 892. Residues glycine 813 to leucine 834 form a disordered region. Residues asparagine 821 to leucine 834 show a composition bias toward basic and acidic residues. The tract at residues methionine 1175–phenylalanine 1196 is disordered. Residues serine 1183–aspartate 1192 are compositionally biased toward acidic residues. 13 N-linked (GlcNAc...) asparagine glycosylation sites follow: asparagine 1309, asparagine 1368, asparagine 1453, asparagine 1785, asparagine 1921, asparagine 2130, asparagine 2146, asparagine 2280, asparagine 2337, asparagine 2520, asparagine 2578, asparagine 2719, and asparagine 2869.

The protein belongs to the CSF1 family. Interacts with MCD4; CSF1 channels phosphatidylethanolamine to MCD4 in the endoplasmic reticulum at contact sites to support GPI anchor biosynthesis.

The protein localises to the cell membrane. Its subcellular location is the endoplasmic reticulum membrane. The protein resides in the mitochondrion membrane. In terms of biological role, tube-forming lipid transport protein which provides phosphatidylethanolamine for glycosylphosphatidylinositol (GPI) anchor synthesis in the endoplasmic reticulum. Required for the glucose and other nutrients uptake at low temperature. The polypeptide is Protein CSF1 (Saccharomyces cerevisiae (strain ATCC 204508 / S288c) (Baker's yeast)).